The sequence spans 142 residues: Large ribosomal subunit protein uL13 (142 aa).

Belongs to the universal ribosomal protein uL13 family. As to quaternary structure, part of the 50S ribosomal subunit.

Functionally, this protein is one of the early assembly proteins of the 50S ribosomal subunit, although it is not seen to bind rRNA by itself. It is important during the early stages of 50S assembly. In Pyrococcus furiosus (strain ATCC 43587 / DSM 3638 / JCM 8422 / Vc1), this protein is Large ribosomal subunit protein uL13.